Here is a 302-residue protein sequence, read N- to C-terminus: tRNA pseudouridine synthase B (302 aa).

The active-site Nucleophile is D47.

It belongs to the pseudouridine synthase TruB family. Type 1 subfamily.

It carries out the reaction uridine(55) in tRNA = pseudouridine(55) in tRNA. Functionally, responsible for synthesis of pseudouridine from uracil-55 in the psi GC loop of transfer RNAs. The protein is tRNA pseudouridine synthase B of Methylobacillus flagellatus (strain ATCC 51484 / DSM 6875 / VKM B-1610 / KT).